Reading from the N-terminus, the 489-residue chain is Transmembrane protein 161A (489 aa).

The N-terminal stretch at 1-23 (MAVMGIQMVVTLLVASLMQRVSP) is a signal peptide. The Extracellular portion of the chain corresponds to 24-98 (HYSFGRWLLC…INTMDALVLR (75 aa)). The N-linked (GlcNAc...) asparagine glycan is linked to N34. The chain crosses the membrane as a helical span at residues 99–119 (YFLEYQWFIDFALYSTIIYLF). Topologically, residues 120-134 (TEAYYCVVDAQNEIN) are cytoplasmic. A helical transmembrane segment spans residues 135–155 (IGVLWCLMSIIFSIKVLFTVM). The Extracellular segment spans residues 156–166 (KHYFRSEEGGE). The helical transmembrane segment at 167 to 187 (RSVCMTFAFFFLLIAMIVTIV) threads the bilayer. Residues 188 to 224 (RDEYLEFGLEPGLASVCHNLENFLAQQGWQWSMPFVK) are Cytoplasmic-facing. A helical transmembrane segment spans residues 225–245 (LAFKIALVALCAFLGGCLTFP). The Extracellular segment spans residues 246 to 264 (GLRLAQTHLDALKMAADRP). The helical transmembrane segment at 265–285 (MLQLLLHMSFLPPVIVVVLWI) threads the bilayer. Topologically, residues 286–304 (RPITRDFLLNAPMGKESVE) are cytoplasmic. Residues 305-325 (LMSNSAYNTFRLWIIVLLCLL) form a helical membrane-spanning segment. Residues 326–370 (RFCLTRFHLQAYLCLADRWVEQMKREAGRISMLEIQRKISRIFCY) lie on the Extracellular side of the membrane. The chain crosses the membrane as a helical span at residues 371-391 (LTVVALQYLAPVILTFHCVFM). The Cytoplasmic portion of the chain corresponds to 392–459 (LKSLGDYSWG…GLFTPLFFRG (68 aa)). The disordered stretch occupies residues 413 to 432 (VDSSPVQSHSPTSEEEEDTE). A helical transmembrane segment spans residues 460 to 480 (IFSFLTWWVSVCQIITSLFGL). Residues 481–489 (YFHQYLGAS) are Extracellular-facing.

It belongs to the TMEM161 family.

The protein resides in the membrane. Functionally, may play a role in protection against oxidative stress. The chain is Transmembrane protein 161A (tmem161a) from Xenopus laevis (African clawed frog).